The chain runs to 81 residues: Delta-conotoxin PVIA (81 aa).

The signal sequence occupies residues 1–22; sequence MKLTCVMIVAVLFLTAWTFVTA. Residues 23–49 constitute a propeptide that is removed on maturation; it reads DDSKNGLENHFWKARDEMKNREASKLD. Intrachain disulfides connect Cys-54/Cys-69, Cys-61/Cys-73, and Cys-68/Cys-78. 2 positions are modified to 4-hydroxyproline: Pro-57 and Pro-65. Residue Gly-80 is modified to Glycine amide; in form delta-conotoxin PVIA.

In terms of processing, the difference between delta-conotoxin PVIA and [deamido]-delta-conotoxin PVIA lies in the state of amidation of Gly-80. Expressed by the venom duct.

The protein localises to the secreted. In terms of biological role, delta-conotoxins bind to site 6 of voltage-gated sodium channels (Nav) and inhibit the inactivation process. This toxin shows weak effects on rNav1.2/SCN2A (EC(50)=2.9 uM), rNav1.4/SCN4A (EC(50)=5.2 uM), hNav1.7/SCN9A (EC(50)=1.9 uM) and rNav1.7/SCN9A (EC(50)=6.4 uM). In vivo, this toxin shows different effects. In mice, injection of this toxin causes hyperactivity, rapid running, limb extension, and death. In fish, the peptide elicites spurts of rapid swimming, with twisted motions, quivering fins and the lockjaw extended mouth syndrome. Rigid paralysis and death are observed at higher doses. In mollusks, this peptide is inactive. Injection of this peptide together with the kappa-conotoxin PVIIA causes the sudden tetanus of prey (STOP) syndrome, which is a single, lethal 'fin-pop' in envenomed fish. The protein is Delta-conotoxin PVIA of Conus purpurascens (Purple cone).